Here is a 70-residue protein sequence, read N- to C-terminus: NAD(P)H-quinone oxidoreductase subunit O (70 aa).

Belongs to the complex I NdhO subunit family. NDH-1 can be composed of about 15 different subunits; different subcomplexes with different compositions have been identified which probably have different functions.

The protein resides in the cellular thylakoid membrane. It catalyses the reaction a plastoquinone + NADH + (n+1) H(+)(in) = a plastoquinol + NAD(+) + n H(+)(out). It carries out the reaction a plastoquinone + NADPH + (n+1) H(+)(in) = a plastoquinol + NADP(+) + n H(+)(out). Its function is as follows. NDH-1 shuttles electrons from an unknown electron donor, via FMN and iron-sulfur (Fe-S) centers, to quinones in the respiratory and/or the photosynthetic chain. The immediate electron acceptor for the enzyme in this species is believed to be plastoquinone. Couples the redox reaction to proton translocation, and thus conserves the redox energy in a proton gradient. Cyanobacterial NDH-1 also plays a role in inorganic carbon-concentration. The chain is NAD(P)H-quinone oxidoreductase subunit O from Nostoc sp. (strain PCC 7120 / SAG 25.82 / UTEX 2576).